The sequence spans 282 residues: MEQKYEEDIQKLQQEIEMLEAEQEETLRSIFVQHGDRLQQGVKSACEERGGGGAQQHAVSKLITEVRELEKDLRRQTEINGITLNECFVKTLHKSERKLVQQLRLAGHCGLLLFQVEFAVTEIQEDNVLHRRVTELNIVVDGVEFKDFSAFVSRVEDTKDLLLFFRTLRTFSERCEDRRQTFQHFQEKYPDVVNLPEGCRSEIMIIRSPQLPGISMTLFWKIHVSKEGVVKPLLDLLLKMPDQALELDTKKVMEKGSDYFQSLLQLLGVEASIEGLIRAVCS.

A coiled-coil region spans residues 1–80 (MEQKYEEDIQ…KDLRRQTEIN (80 aa)).

It belongs to the CENP-P/CTF19 family.

Its subcellular location is the nucleus. The protein resides in the chromosome. It localises to the centromere. Probable component of a centromeric complex involved in assembly of kinetochore proteins, mitotic progression and chromosome segregation. The polypeptide is Centromere protein P (cenpp) (Danio rerio (Zebrafish)).